A 145-amino-acid chain; its full sequence is Cell division protein SepF (145 aa).

Residues 21–41 form a disordered region; that stretch reads DKPQESTKAKEENVKPKHETP. Residues 23 to 41 show a composition bias toward basic and acidic residues; the sequence is PQESTKAKEENVKPKHETP.

The protein belongs to the SepF family. In terms of assembly, homodimer. Interacts with FtsZ.

The protein localises to the cytoplasm. Functionally, cell division protein that is part of the divisome complex and is recruited early to the Z-ring. Probably stimulates Z-ring formation, perhaps through the cross-linking of FtsZ protofilaments. Its function overlaps with FtsA. The sequence is that of Cell division protein SepF from Caldicellulosiruptor saccharolyticus (strain ATCC 43494 / DSM 8903 / Tp8T 6331).